The sequence spans 140 residues: CDGSH iron-sulfur domain-containing protein 2 homolog (140 aa).

Residues 1-35 are Lumenal-facing; it reads MEAIAKLIKVQLPNYLQKLPVPSSLSGFAELSPSD. A helical transmembrane segment spans residues 36–59; the sequence is AIAVVFPFAVVSWLIGYSTYKFFQ. The Cytoplasmic segment spans residues 60-140; that stretch reads PKAVELPPSP…GPLIVKGKAN (81 aa). [2Fe-2S] cluster contacts are provided by Cys-104, Cys-106, Cys-115, and His-119.

This sequence belongs to the CISD protein family. CISD2 subfamily. [2Fe-2S] cluster serves as cofactor.

Its subcellular location is the endoplasmic reticulum membrane. This is CDGSH iron-sulfur domain-containing protein 2 homolog from Trichoplax adhaerens (Trichoplax reptans).